A 185-amino-acid chain; its full sequence is MPRHQNYSLSDEAAVQLVFRKYGVKVSAEQIAKAYAPEQKMSWKKSVEVARFIEGMTLRQAKSWLEDVVKMKRPIPIRTFKKKQAHHATPWSGWPVAKWPVKVARRFLDLLENLENNARFRGLDVERVVIVHAAAHKGYRIHNIMPRAFGRATRFDEQTVNVEVIAAELPQQVVPKRYRLNLVKR.

Belongs to the universal ribosomal protein uL22 family. As to quaternary structure, part of the 50S ribosomal subunit.

In terms of biological role, this protein binds specifically to 23S rRNA. It makes multiple contacts with different domains of the 23S rRNA in the assembled 50S subunit and ribosome. The globular domain of the protein is located near the polypeptide exit tunnel on the outside of the subunit, while an extended beta-hairpin is found that lines the wall of the exit tunnel in the center of the 70S ribosome. This chain is Large ribosomal subunit protein uL22, found in Pyrobaculum neutrophilum (strain DSM 2338 / JCM 9278 / NBRC 100436 / V24Sta) (Thermoproteus neutrophilus).